The following is a 959-amino-acid chain: MTAESEVVNWPANEIRRTFLKYFEDHGHTIVPSSSVIPYDDPTLLFANAGMNQFKPIFLGTVDPSSDFAKLKRACDSQKCIRAGGKHNDLEDVGKDNYHHTMFEMLGNWSFGDYFKKEAIAMAWDLLTNVYGLKKDQLYVTYFGGHEESGLEPDLEARQLWLDIGIDESRVIPGSLKDNFWEMGDQGPCGPCSEIHYDRIGNRTVPELVNMDDPNVLEIWNIVFIQFNREKDGSLRPLPNRHVDTGMGFERLVSVIQNKTSNYDTDVFSPIFAKIQELTNARPYTGKMGDEDVDGIDTAYRVVADHVRTLTFAISDGGVPNNEGRGYVLRRILRRGARYVRKKFGVPIGNFFSRLSLTVVEQMGDFFPELKRKVDDVRELLDEEEESFSRTLDRGEKMFEQYAAAAKKTPSKTLQGNDVWRLYETYGFPVDLTHLMAEEAGIKIDEPGFEAAQARSKEISKQASKGGSSGDDLLVLDVHALGALSKMDDIPETDDVFKHNSVSLKSVIKGIYHKGGFQKSTEGFNSGEQLGLLLDRTNFYAEQGGQEYDTGHIVIDGVADFRVTNVQVYAGYVLHTGFLEYGNLTVNDSVVCEYDEIRRWHLMNNHTVTHILNLALRNTLGDGIDQRGSLVSQEKLRFDFSYKSSIPIDKLLLVENYCNNVIQDNLSVYSKEVALSKAKEINGLRAVFGEVYPDPVRVVCIGVDIDTLLQEPKKPDWTKYSIEFCGGTHCDKSGEIKDFVILEENGIAKGIRRIVAVTSTEANRVSRLANEFDARIAKLEKMPFSPAKEAELKKISVDLSKLVVAAVRKHAMKERIAKITKQVQEHVKAINAAEQKEVVNVVTEYFKENPDMSFVVAKVPISANPKALSFALTYAKKNLKDKSIYLLASDDTKVAHACLVSPEAMKKLTPQEWSQKVCHSIGGRSGGKGDTCQGVGDKPLSIDVAVEEAIEFFQGKLTI.

Ser389 carries the phosphoserine modification. Zn(2+) contacts are provided by His606, His610, Cys725, and His729.

The protein belongs to the class-II aminoacyl-tRNA synthetase family. Monomer. The cofactor is Zn(2+).

Its subcellular location is the mitochondrion. The protein localises to the cytoplasm. The catalysed reaction is tRNA(Ala) + L-alanine + ATP = L-alanyl-tRNA(Ala) + AMP + diphosphate. Its function is as follows. Catalyzes the attachment of alanine to tRNA(Ala) in a two-step reaction: alanine is first activated by ATP to form Ala-AMP and then transferred to the acceptor end of tRNA(Ala). Also edits incorrectly charged tRNA(Ala) via its editing domain. This chain is Alanine--tRNA ligase (ala1), found in Schizosaccharomyces pombe (strain 972 / ATCC 24843) (Fission yeast).